Reading from the N-terminus, the 207-residue chain is Alpha-1-acid glycoprotein 8 (207 aa).

An N-terminal signal peptide occupies residues 1 to 18; that stretch reads MALHTVLIMLSLLPMLEA. 5 N-linked (GlcNAc...) asparagine glycosylation sites follow: Asn-25, Asn-34, Asn-76, Asn-94, and Asn-104. The cysteines at positions 91 and 184 are disulfide-linked.

This sequence belongs to the calycin superfamily. Lipocalin family. In terms of tissue distribution, expressed by the liver and secreted in plasma.

Its subcellular location is the secreted. Its function is as follows. Functions as a transport protein in the blood stream. Binds various ligands in the interior of its beta-barrel domain. Appears to function in modulating the activity of the immune system during the acute-phase reaction. This is Alpha-1-acid glycoprotein 8 (Orm8) from Mus caroli (Ryukyu mouse).